A 36-amino-acid chain; its full sequence is Photosystem II reaction center protein M (36 aa).

The helical transmembrane segment at 5 to 25 threads the bilayer; it reads ILGLIATALFIIIPTSFLLIL.

The protein belongs to the PsbM family. In terms of assembly, PSII is composed of 1 copy each of membrane proteins PsbA, PsbB, PsbC, PsbD, PsbE, PsbF, PsbH, PsbI, PsbJ, PsbK, PsbL, PsbM, PsbT, PsbX, PsbY, PsbZ, Psb30/Ycf12, at least 3 peripheral proteins of the oxygen-evolving complex and a large number of cofactors. It forms dimeric complexes.

The protein resides in the plastid. The protein localises to the chloroplast thylakoid membrane. One of the components of the core complex of photosystem II (PSII). PSII is a light-driven water:plastoquinone oxidoreductase that uses light energy to abstract electrons from H(2)O, generating O(2) and a proton gradient subsequently used for ATP formation. It consists of a core antenna complex that captures photons, and an electron transfer chain that converts photonic excitation into a charge separation. This subunit is found at the monomer-monomer interface. This Chlorokybus atmophyticus (Soil alga) protein is Photosystem II reaction center protein M.